Consider the following 449-residue polypeptide: Chromosomal replication initiator protein DnaA (449 aa).

A domain I, interacts with DnaA modulators region spans residues 1–69 (MEKVWLEAQS…VEAISSLTSV (69 aa)). The interval 69–112 (VKYQIEFKITEKIPLESKPVDNFTPVIKDNEPSKETNKNIDITA) is domain II. Residues 113-329 (NLNPKYTFDS…GMLIRLGAYA (217 aa)) form a domain III, AAA+ region region. 4 residues coordinate ATP: G157, G159, K160, and T161. The tract at residues 330–449 (SLTGSEITLN…VENLKKELIT (120 aa)) is domain IV, binds dsDNA.

It belongs to the DnaA family. As to quaternary structure, oligomerizes as a right-handed, spiral filament on DNA at oriC.

It is found in the cytoplasm. Plays an essential role in the initiation and regulation of chromosomal replication. ATP-DnaA binds to the origin of replication (oriC) to initiate formation of the DNA replication initiation complex once per cell cycle. Binds the DnaA box (a 9 base pair repeat at the origin) and separates the double-stranded (ds)DNA. Forms a right-handed helical filament on oriC DNA; dsDNA binds to the exterior of the filament while single-stranded (ss)DNA is stabiized in the filament's interior. The ATP-DnaA-oriC complex binds and stabilizes one strand of the AT-rich DNA unwinding element (DUE), permitting loading of DNA polymerase. After initiation quickly degrades to an ADP-DnaA complex that is not apt for DNA replication. Binds acidic phospholipids. This Geotalea uraniireducens (strain Rf4) (Geobacter uraniireducens) protein is Chromosomal replication initiator protein DnaA.